The chain runs to 95 residues: Selenoprotein K (95 aa).

A helical membrane pass occupies residues L20–I42. The interval T47–R95 is disordered. Residue U93 is a non-standard amino acid, selenocysteine.

It belongs to the selenoprotein K family.

It is found in the endoplasmic reticulum membrane. Its subcellular location is the cell membrane. Functionally, required for Ca(2+) flux in immune cells and plays a role in T-cell proliferation and in T-cell and neutrophil migration. Involved in endoplasmic reticulum-associated degradation (ERAD) of soluble glycosylated proteins. Required for cell surface expression of CD36 and involved in macrophage uptake of low-density lipoprotein and in foam cell formation. Required for palmitoylation. The sequence is that of Selenoprotein K (selenok) from Xenopus laevis (African clawed frog).